Reading from the N-terminus, the 227-residue chain is Cytochrome c oxidase subunit 2 (227 aa).

Residues 1–14 (MAYPMQLGFQDATS) are Mitochondrial intermembrane-facing. Residues 15–45 (PIMEELLHFHDHTLMIVFLISSLVLYIISLM) traverse the membrane as a helical segment. Residues 46 to 59 (LTTKLTHTSTMDAQ) lie on the Mitochondrial matrix side of the membrane. A helical membrane pass occupies residues 60–87 (EVETIWTILPAIILILIALPSLRILYMM). The Mitochondrial intermembrane segment spans residues 88–227 (DEINNPSLTV…YFEKWSASML (140 aa)). Positions 161, 196, 198, 200, 204, and 207 each coordinate Cu cation. Glu198 is a binding site for Mg(2+). Tyr218 is subject to Phosphotyrosine.

This sequence belongs to the cytochrome c oxidase subunit 2 family. As to quaternary structure, component of the cytochrome c oxidase (complex IV, CIV), a multisubunit enzyme composed of 14 subunits. The complex is composed of a catalytic core of 3 subunits MT-CO1, MT-CO2 and MT-CO3, encoded in the mitochondrial DNA, and 11 supernumerary subunits COX4I, COX5A, COX5B, COX6A, COX6B, COX6C, COX7A, COX7B, COX7C, COX8 and NDUFA4, which are encoded in the nuclear genome. The complex exists as a monomer or a dimer and forms supercomplexes (SCs) in the inner mitochondrial membrane with NADH-ubiquinone oxidoreductase (complex I, CI) and ubiquinol-cytochrome c oxidoreductase (cytochrome b-c1 complex, complex III, CIII), resulting in different assemblies (supercomplex SCI(1)III(2)IV(1) and megacomplex MCI(2)III(2)IV(2)). Found in a complex with TMEM177, COA6, COX18, COX20, SCO1 and SCO2. Interacts with TMEM177 in a COX20-dependent manner. Interacts with COX20. Interacts with COX16. The cofactor is Cu cation.

The protein localises to the mitochondrion inner membrane. The catalysed reaction is 4 Fe(II)-[cytochrome c] + O2 + 8 H(+)(in) = 4 Fe(III)-[cytochrome c] + 2 H2O + 4 H(+)(out). Its function is as follows. Component of the cytochrome c oxidase, the last enzyme in the mitochondrial electron transport chain which drives oxidative phosphorylation. The respiratory chain contains 3 multisubunit complexes succinate dehydrogenase (complex II, CII), ubiquinol-cytochrome c oxidoreductase (cytochrome b-c1 complex, complex III, CIII) and cytochrome c oxidase (complex IV, CIV), that cooperate to transfer electrons derived from NADH and succinate to molecular oxygen, creating an electrochemical gradient over the inner membrane that drives transmembrane transport and the ATP synthase. Cytochrome c oxidase is the component of the respiratory chain that catalyzes the reduction of oxygen to water. Electrons originating from reduced cytochrome c in the intermembrane space (IMS) are transferred via the dinuclear copper A center (CU(A)) of subunit 2 and heme A of subunit 1 to the active site in subunit 1, a binuclear center (BNC) formed by heme A3 and copper B (CU(B)). The BNC reduces molecular oxygen to 2 water molecules using 4 electrons from cytochrome c in the IMS and 4 protons from the mitochondrial matrix. In Boselaphus tragocamelus (Nilgai), this protein is Cytochrome c oxidase subunit 2 (MT-CO2).